A 464-amino-acid chain; its full sequence is Formin-like protein 19 (464 aa).

A disordered region spans residues 1–74 (MSLVDISGAY…PRPCSRPPKT (74 aa)). The segment covering 14–70 (PLPPPPPPLMRRRAPLPPPPPPPLMRRRAPPPPPPPLMRRRAPPPPPPPPLPRPCSR) has biased composition (pro residues). Residues 68 to 462 (CSRPPKTKCS…KAAKEAEMEK (395 aa)) enclose the FH2 domain.

Belongs to the formin-like family. Class-II subfamily.

The sequence is that of Formin-like protein 19 (FH19) from Arabidopsis thaliana (Mouse-ear cress).